Here is a 72-residue protein sequence, read N- to C-terminus: Translation initiation factor IF-1 (72 aa).

Residues 1–72 (MSKEEAIEVE…SRGRITYRAK (72 aa)) enclose the S1-like domain.

Belongs to the IF-1 family. In terms of assembly, component of the 30S ribosomal translation pre-initiation complex which assembles on the 30S ribosome in the order IF-2 and IF-3, IF-1 and N-formylmethionyl-tRNA(fMet); mRNA recruitment can occur at any time during PIC assembly.

It localises to the cytoplasm. In terms of biological role, one of the essential components for the initiation of protein synthesis. Stabilizes the binding of IF-2 and IF-3 on the 30S subunit to which N-formylmethionyl-tRNA(fMet) subsequently binds. Helps modulate mRNA selection, yielding the 30S pre-initiation complex (PIC). Upon addition of the 50S ribosomal subunit IF-1, IF-2 and IF-3 are released leaving the mature 70S translation initiation complex. The sequence is that of Translation initiation factor IF-1 from Geobacter metallireducens (strain ATCC 53774 / DSM 7210 / GS-15).